We begin with the raw amino-acid sequence, 93 residues long: Auxin-responsive protein SAUR26 (93 aa).

It belongs to the ARG7 family. Interacts with PP2C-D1. As to expression, higher expression in thermo-responsive cultivars (e.g. cv. Alst-1, cv. Ang-0 and cv. Com-0) than in low thermo-responsive cultivars (e.g. cv. Dja-1, cv. El-0 and cv. Kon).

The protein resides in the cell membrane. In terms of biological role, provide a mechanistic link between auxin and plasma membrane H(+)-ATPases (PM H(+)-ATPases, e.g. AHA1 and AHA2), and triggers PM H(+)-ATPases activity by promoting phosphorylation of their C-terminal autoinhibitory domain as a result of PP2C-D subfamily of type 2C phosphatases inhibition, thus leading to the acidification of the apoplast and the facilitation of solutes and water uptake to drive cell expansion. Functions as a positive effectors of cell expansion through modulation of auxin transport. Involved in thermo-responsiveness of plant architecture. Enhances plasma membrane H(+)-ATPase. Probably involved in light intensity mediated root development. This chain is Auxin-responsive protein SAUR26, found in Arabidopsis thaliana (Mouse-ear cress).